The sequence spans 1067 residues: FHIP family protein GL19323 (1067 aa).

Polar residues predominate over residues 1 to 11; it reads MSWLRSSPLRQ. 3 disordered regions span residues 1–31, 503–525, and 832–1013; these read MSWL…GSLR, LARP…QPIQ, and NENS…SEPA. A phosphoserine mark is found at Ser508 and Ser835. A compositionally biased stretch (low complexity) spans 842-858; that stretch reads QPQTTLSQQQQQQQGQQ. The span at 859-878 shows a compositional bias: polar residues; it reads RSAYATLSAATPVQATQTSA. Positions 893 to 904 are enriched in low complexity; it reads SKSISSMFSRRS. The segment covering 918–949 has biased composition (polar residues); sequence LVGNNNSGSGQSQPFSSTGTGTCETSLSTNPQ. Residues 950–979 are compositionally biased toward low complexity; it reads SGAAAARSTGTATTANGNSSNSNISIGGST. Residues 980–996 are compositionally biased toward polar residues; it reads QTLSGHSNTTTYSSSTL.

The protein belongs to the FHIP family.

The chain is FHIP family protein GL19323 from Drosophila persimilis (Fruit fly).